Consider the following 307-residue polypeptide: MILLSYLLTYLLCALTCSARAIHNGRSLIPRAGSLEQVTDFGDNPSNVKMYIYVPTNLASNPGIIVAIHYCTGTAQAYYQGSPYAQLAETHGFIVIYPESPYEGTCWDVSSQATLTHNGGGNSNSIANMVTWTTKQYNADSSKVFVTGTSSGAMMTNVMAATYPDLFAAGIAYAGVPAGCFLSTADQPDAWNSTCAQGQSITTPEHWASIAEAMYPDYSGSRPKMQIYHGNVDTTLYPQNYEETCKQWAGVFGYNYDAPESTESNTPEANWSRTTWGPNLQGILAGGVGHNIQIHGDEDMKWFGFTN.

Residues Met1–Ala19 form the signal peptide. The active-site Charge relay system is the Ser150. Residues Asn192 and Asn270 are each glycosylated (N-linked (GlcNAc...) asparagine).

It belongs to the carbohydrate esterase 1 (CE1) family. AxeA subfamily. Monomer.

The protein resides in the secreted. The enzyme catalyses Deacetylation of xylans and xylo-oligosaccharides.. It functions in the pathway glycan degradation; xylan degradation. In terms of biological role, acetylxylan esterase involved in the hydrolysis of xylan, a major structural heterogeneous polysaccharide found in plant biomass representing the second most abundant polysaccharide in the biosphere, after cellulose. Degrades acetylated xylans by cleaving acetyl side groups from the hetero-xylan backbone. In Aspergillus flavus (strain ATCC 200026 / FGSC A1120 / IAM 13836 / NRRL 3357 / JCM 12722 / SRRC 167), this protein is Probable acetylxylan esterase A (axeA).